The following is a 478-amino-acid chain: MQNLPALLLFCGVVCSAYPVDRAAEDENNNMELTQQYLENYYNLGKDVKPFVRRRNSGPVVEKIREMQKFLGLEVTGKVDSDTLAMMRRPRCGVPDVGDFTTFPGMPKWRKTHLTYRIMNYTPDLPRDAVDSAIEKALNVWKEVTPLTFSRTDEGEADIKISFAVRDHGDFNPFDGPGNVLGHAYPPGPGIYGDAHFDDDEQWTSDTSGTNLFLVAAHELGHSLGLFHSADPSALMYPVYNVLADLARFHLSQDDVNGIQSLYGGPPSDSSNDPVVPTESVPPGPGTPAACDPTLSFDAISTLRGEFLFFKDRHFWRKSLRTLEPGFYLISSFWPSLPSGLDAAYEETSKDIVFIFKGNQFWAMRGTEVQAGYPKGIHTLGFPPTVKKIDAAVFDKEKKKTYFFVGDKYWRFDEKRQSMEPGFPKQIAEDFPGVDSKVDAAFEAFGFYYFFNGSSQLEFDPNAKKVTHVLKSNSWLNC.

An N-terminal signal peptide occupies residues 1-17 (MQNLPALLLFCGVVCSA). A propeptide spans 18–99 (YPVDRAAEDE…PRCGVPDVGD (82 aa)) (activation peptide). The short motif at 90–97 (PRCGVPDV) is the Cysteine switch element. Position 92 (cysteine 92) interacts with Zn(2+). The Ca(2+) site is built by aspartate 124 and aspartate 158. Histidine 168 and aspartate 170 together coordinate Zn(2+). Residues aspartate 175, glycine 176, glycine 178, and valine 180 each coordinate Ca(2+). Histidine 183 contributes to the Zn(2+) binding site. Glycine 190 and aspartate 194 together coordinate Ca(2+). Histidine 196 is a binding site for Zn(2+). 3 residues coordinate Ca(2+): aspartate 198, aspartate 199, and glutamate 201. Position 218 (histidine 218) interacts with Zn(2+). Glutamate 219 is an active-site residue. Zn(2+)-binding residues include histidine 222 and histidine 228. The segment at 260 to 286 (QSLYGGPPSDSSNDPVVPTESVPPGPG) is disordered. Residues 266 to 277 (PPSDSSNDPVVP) show a composition bias toward low complexity. Hemopexin repeat units follow at residues 288-337 (PAAC…WPSL), 338-384 (PSGL…GFPP), 386-434 (VKKI…FPGV), and 435-478 (DSKV…WLNC). Cysteine 291 and cysteine 478 form a disulfide bridge. Aspartate 298 is a Ca(2+) binding site. Aspartate 390 and aspartate 439 together coordinate Ca(2+). Asparagine 452 carries N-linked (GlcNAc...) asparagine glycosylation.

This sequence belongs to the peptidase M10A family. Requires Ca(2+) as cofactor. It depends on Zn(2+) as a cofactor.

Its subcellular location is the secreted. The protein resides in the extracellular space. It is found in the extracellular matrix. The catalysed reaction is Preferential cleavage where P1', P2' and P3' are hydrophobic residues.. In terms of biological role, metalloproteinase with a rather broad substrate specificity that can degrade fibronectin, laminin, gelatins of type I, III, IV, and V; collagens III, IV, X, and IX, and cartilage proteoglycans. Activates different molecules including growth factors, plasminogen or other matrix metalloproteinases such as MMP9. Once released into the extracellular matrix (ECM), the inactive pro-enzyme is activated by the plasmin cascade signaling pathway. Also acts intracellularly. For example, in dopaminergic neurons, gets activated by the serine protease HTRA2 upon stress and plays a pivotal role in DA neuronal degeneration by mediating microglial activation and alpha-synuclein/SNCA cleavage. In addition, plays a role in immune response and possesses antiviral activity against various viruses. Mechanistically, translocates from the cytoplasm into the cell nucleus upon virus infection to influence NF-kappa-B activities. In Canis lupus familiaris (Dog), this protein is Stromelysin-1 (MMP3).